Here is a 284-residue protein sequence, read N- to C-terminus: Peflin (284 aa).

Residues 1-111 form a disordered region; that stretch reads MASYPYRQGC…QPGLYGQGGA (111 aa). Residues 8–26 are compositionally biased toward low complexity; sequence QGCPGAAGQAPGAPPGSYY. 9 repeat units span residues 21–29, 31–39, 41–49, 50–58, 59–67, 76–84, 85–92, 93–100, and 101–109. Residues 21–109 are 9 X 9 AA approximate tandem repeat of [AP]-P-G-G-P-Y-G-G-P-P; the sequence is PPGSYYPGPP…AQQPGLYGQG (89 aa). Residues 34–50 show a composition bias toward gly residues; it reads GQYGSGLPPGGGYGGPA. A compositionally biased stretch (low complexity) spans 65-75; that stretch reads GHPNPGMFPSG. A compositionally biased stretch (gly residues) spans 76-90; the sequence is TPGGPYGGAAPGGPY. 5 consecutive EF-hand domains span residues 114-149, 155-183, 181-216, 217-253, and 254-283; these read NVDP…CNWS, TCLM…WKFI, KFIQ…MGYN, LSPQ…LQVL, and TEAF…ASRM. D127, D129, S131, and Y133 together coordinate Ca(2+). K137 participates in a covalent cross-link: Glycyl lysine isopeptide (Lys-Gly) (interchain with G-Cter in ubiquitin). E138 is a Ca(2+) binding site. Residues D194, D196, S198, S200, and E205 each contribute to the Ca(2+) site. Positions 204 to 284 are required for interaction with PDCD6; that stretch reads TELQQALSQM…FVTMTASRML (81 aa).

As to quaternary structure, heterodimer; heterodimerizes (via the EF-hand 5) with PDCD6. Dissociates from PDCD6 in presence of calcium. In terms of processing, ubiquitinated by the BCR(KLHL12) E3 ubiquitin ligase complex.

Its subcellular location is the cytoplasm. The protein resides in the endoplasmic reticulum. The protein localises to the membrane. It localises to the cytoplasmic vesicle. It is found in the COPII-coated vesicle membrane. Its function is as follows. Calcium-binding protein that acts as an adapter that bridges unrelated proteins or stabilizes weak protein-protein complexes in response to calcium. Together with PDCD6, acts as a calcium-dependent adapter for the BCR(KLHL12) complex, a complex involved in endoplasmic reticulum (ER)-Golgi transport by regulating the size of COPII coats. In response to cytosolic calcium increase, the heterodimer formed with PDCD6 interacts with, and bridges together the BCR(KLHL12) complex and SEC31 (SEC31A or SEC31B), promoting monoubiquitination of SEC31 and subsequent collagen export, which is required for neural crest specification. Its role in the heterodimer formed with PDCD6 is however unclear: some evidence shows that PEF1 and PDCD6 work together and promote association between PDCD6 and SEC31 in presence of calcium. Other reports show that PEF1 dissociates from PDCD6 in presence of calcium, and may act as a negative regulator of PDCD6. Also acts as a negative regulator of ER-Golgi transport; possibly by inhibiting interaction between PDCD6 and SEC31. The chain is Peflin from Homo sapiens (Human).